The primary structure comprises 87 residues: Large ribosomal subunit protein bL27c (87 aa).

The segment at 1-20 is disordered; it reads MAHKKGSGSTKNGRDSRSQR.

The protein belongs to the bacterial ribosomal protein bL27 family.

The protein resides in the plastid. It localises to the chloroplast. The protein is Large ribosomal subunit protein bL27c of Gracilaria tenuistipitata var. liui (Red alga).